We begin with the raw amino-acid sequence, 222 residues long: Ribosomal RNA small subunit methyltransferase G (222 aa).

Residues Gly84, Phe89, 141–142, and Arg154 each bind S-adenosyl-L-methionine; that span reads VE.

Belongs to the methyltransferase superfamily. RNA methyltransferase RsmG family.

It is found in the cytoplasm. It carries out the reaction guanosine(527) in 16S rRNA + S-adenosyl-L-methionine = N(7)-methylguanosine(527) in 16S rRNA + S-adenosyl-L-homocysteine. Functionally, specifically methylates the N7 position of guanine in position 527 of 16S rRNA. The protein is Ribosomal RNA small subunit methyltransferase G of Bradyrhizobium sp. (strain ORS 278).